Consider the following 490-residue polypeptide: Sphingomyelinase (490 aa).

The signal sequence occupies residues 1 to 31 (MDYAKRIGQVGALAVVLGVGAAVTTHAIGSA). A disordered region spans residues 30 to 49 (SAAPTDPSSSSTDSPVDACS). At 32-136 (APTDPSSSST…FDACDPDGNR (105 aa)) the chain is on the periplasmic side. Residues 137–145 (MTFAVRERG) form a beta stranded membrane-spanning segment. The Extracellular portion of the chain corresponds to 146–161 (APGGPQHGIVTVDQRT). A beta stranded membrane pass occupies residues 162–168 (ASFIYTA). Residues 169–171 (DPG) lie on the Periplasmic side of the membrane. The chain crosses the membrane as a beta stranded span at residues 172–182 (FVGTDTFSVNV). The Extracellular portion of the chain corresponds to 183 to 187 (SDDTS). The chain crosses the membrane as a beta stranded span at residues 188–196 (LHVHGLAGY). Over 197-204 (LGPFHGHD) the chain is Periplasmic. Residues 205–213 (DVATVTVFV) traverse the membrane as a beta stranded segment. Topologically, residues 214 to 490 (GNTPTDTISG…HYVADNVAVR (277 aa)) are extracellular.

It belongs to the SpmT family.

The protein localises to the cell outer membrane. The enzyme catalyses a sphingomyelin + H2O = phosphocholine + an N-acylsphing-4-enine + H(+). Its function is as follows. Catalyzes the cleavage of sphingomyelin, a major lipid in eukaryotic cells, into ceramide and phosphocholine, which are then utilized by M.bovis as carbon, nitrogen and phosphorus sources, respectively. Thus, enables M.bovis to utilize sphingomyelin as a source of several essential nutrients for intracellular growth during infection. Furthermore, lyses erythrocytes and constitutes a hemolytic factor. This Mycobacterium bovis (strain ATCC BAA-935 / AF2122/97) protein is Sphingomyelinase.